The sequence spans 247 residues: Cell division protein ZapD (247 aa).

It belongs to the ZapD family. As to quaternary structure, interacts with FtsZ.

It localises to the cytoplasm. Its function is as follows. Cell division factor that enhances FtsZ-ring assembly. Directly interacts with FtsZ and promotes bundling of FtsZ protofilaments, with a reduction in FtsZ GTPase activity. In Cronobacter sakazakii (strain ATCC BAA-894) (Enterobacter sakazakii), this protein is Cell division protein ZapD.